Consider the following 177-residue polypeptide: MSRVAKAPVEVPSGVEVTLQGNDIQVKGPKGQMAWSCHRLVSLNQEEGTLTFEPRQQSTRAVALTGTTRALVQNMVTGVSEGFERRLELKGVGYRAQVQGSTLNLTLGFSHPVHYEIPEGVTIECPSQTEVVVKGADKQQVGQVAAQIRGYRPPEPYKGKGVRYADERVVLKEAKKK.

This sequence belongs to the universal ribosomal protein uL6 family. As to quaternary structure, part of the 50S ribosomal subunit.

Functionally, this protein binds to the 23S rRNA, and is important in its secondary structure. It is located near the subunit interface in the base of the L7/L12 stalk, and near the tRNA binding site of the peptidyltransferase center. The chain is Large ribosomal subunit protein uL6 from Halorhodospira halophila (strain DSM 244 / SL1) (Ectothiorhodospira halophila (strain DSM 244 / SL1)).